We begin with the raw amino-acid sequence, 143 residues long: Large-conductance mechanosensitive channel (143 aa).

2 helical membrane passes run 16-36 and 84-104; these read VIDL…VTAL and INTV…VKLI.

It belongs to the MscL family. As to quaternary structure, homopentamer.

It localises to the cell inner membrane. Channel that opens in response to stretch forces in the membrane lipid bilayer. May participate in the regulation of osmotic pressure changes within the cell. This chain is Large-conductance mechanosensitive channel, found in Xanthomonas axonopodis pv. citri (strain 306).